Here is a 464-residue protein sequence, read N- to C-terminus: Cysteine--tRNA ligase (464 aa).

C28 is a binding site for Zn(2+). Residues 30 to 40 (PTVYDTAHIGN) carry the 'HIGH' region motif. C212, H237, and E241 together coordinate Zn(2+). Positions 270 to 274 (KMSKS) match the 'KMSKS' region motif. Position 273 (K273) interacts with ATP.

The protein belongs to the class-I aminoacyl-tRNA synthetase family. As to quaternary structure, monomer. The cofactor is Zn(2+).

The protein resides in the cytoplasm. It carries out the reaction tRNA(Cys) + L-cysteine + ATP = L-cysteinyl-tRNA(Cys) + AMP + diphosphate. In Wolbachia pipientis subsp. Culex pipiens (strain wPip), this protein is Cysteine--tRNA ligase.